Here is a 160-residue protein sequence, read N- to C-terminus: 3-hydroxyacyl-[acyl-carrier-protein] dehydratase FabZ (160 aa).

Residue H60 is part of the active site.

It belongs to the thioester dehydratase family. FabZ subfamily.

The protein localises to the cytoplasm. The enzyme catalyses a (3R)-hydroxyacyl-[ACP] = a (2E)-enoyl-[ACP] + H2O. Its function is as follows. Involved in unsaturated fatty acids biosynthesis. Catalyzes the dehydration of short chain beta-hydroxyacyl-ACPs and long chain saturated and unsaturated beta-hydroxyacyl-ACPs. In Rhodospirillum rubrum (strain ATCC 11170 / ATH 1.1.1 / DSM 467 / LMG 4362 / NCIMB 8255 / S1), this protein is 3-hydroxyacyl-[acyl-carrier-protein] dehydratase FabZ.